The sequence spans 150 residues: MFDVLVYLYENYWQPDACPDHRQLSRKLSAVGFENEEIEDALSWLDGLATAAESHSGEQSAHALRVYSPMEQEHLGEASIGFVSFLESAGVLRAPMREMVIDRAMAIPAGPLAVEDLKIIVLMVFWSLGEEPDALILDELFVDDEDRLIH.

Belongs to the Smg family.

This chain is Protein Smg homolog, found in Methylibium petroleiphilum (strain ATCC BAA-1232 / LMG 22953 / PM1).